The chain runs to 133 residues: ATP synthase epsilon chain, chloroplastic (133 aa).

Belongs to the ATPase epsilon chain family. In terms of assembly, F-type ATPases have 2 components, CF(1) - the catalytic core - and CF(0) - the membrane proton channel. CF(1) has five subunits: alpha(3), beta(3), gamma(1), delta(1), epsilon(1). CF(0) has three main subunits: a, b and c.

The protein localises to the plastid. It localises to the chloroplast thylakoid membrane. Its function is as follows. Produces ATP from ADP in the presence of a proton gradient across the membrane. The protein is ATP synthase epsilon chain, chloroplastic of Gossypium barbadense (Sea Island cotton).